The chain runs to 162 residues: SCF ubiquitin ligase complex protein SKP1a (162 aa).

The residue at position 2 (Ser2) is an N-acetylserine. The interaction with the F-box domain of F-box proteins stretch occupies residues 100-162 (ILAANYLDIK…NEWCEDKGGN (63 aa)). Pro143 carries the 4-hydroxyproline modification. Residue Pro143 is glycosylated (O-linked (GlcNAc...) hydroxyproline).

This sequence belongs to the SKP1 family. Multiprotein complex (SCF) with cullin and F-box-containing protein. Capable of undergoing aggregation. In terms of processing, O-linked glycan consists of linear Gal-Gal-Fuc-Gal-GlcNAc. FpaA and fpaB seem to be identically glycosylated. Glycosylation is required for nuclear enrichment. Post-translationally, hydroxylated by phyA.

Its subcellular location is the cytoplasm. The protein localises to the nucleus. The protein is SCF ubiquitin ligase complex protein SKP1a (fpaA) of Dictyostelium discoideum (Social amoeba).